The primary structure comprises 608 residues: Threonine--tRNA ligase (608 aa).

The tract at residues 1–143 (MRVLYIHAER…SFKPEEGRAD (143 aa)) is editing domain. Catalytic stretches follow at residues 194–490 (PKYL…PRLP) and 195–490 (KYLE…PRLP). Zn(2+) is bound by residues C287, H338, and H459.

It belongs to the class-II aminoacyl-tRNA synthetase family. In terms of assembly, homodimer. The cofactor is Zn(2+).

The protein localises to the cytoplasm. The catalysed reaction is tRNA(Thr) + L-threonine + ATP = L-threonyl-tRNA(Thr) + AMP + diphosphate + H(+). Catalyzes the attachment of threonine to tRNA(Thr) in a two-step reaction: L-threonine is first activated by ATP to form Thr-AMP and then transferred to the acceptor end of tRNA(Thr). Also edits incorrectly charged L-seryl-tRNA(Thr). This Pyrobaculum aerophilum (strain ATCC 51768 / DSM 7523 / JCM 9630 / CIP 104966 / NBRC 100827 / IM2) protein is Threonine--tRNA ligase.